Consider the following 1124-residue polypeptide: Translation initiation factor IF-2 (1124 aa).

Residues 32–41 are compositionally biased toward low complexity; that stretch reads IAAKSHSSSI. Disordered stretches follow at residues 32-451 and 480-523; these read IAAK…QKVH and LARP…RAAR. The segment covering 94–104 has biased composition (polar residues); the sequence is ATSSSEISQVK. Positions 134 to 173 are enriched in low complexity; sequence VNPTTTPTSSPPKTAARPVNAPISRPATPSRPSAPTPRSA. Polar residues predominate over residues 192–203; it reads GQTSTSSKATTV. Low complexity predominate over residues 214–227; sequence SRPQSPAAPGRSAP. 2 stretches are compositionally biased toward basic and acidic residues: residues 235–246 and 261–272; these read SDRKAPKPELVG and PEPEGQRPDKKR. 2 stretches are compositionally biased toward low complexity: residues 274–283 and 411–422; these read GISPRPIGGP and RPAQAPAAGAPR. Residues 425-439 show a composition bias toward basic and acidic residues; that stretch reads GRPDWDDSAKLEALR. Basic residues-rich tracts occupy residues 484 to 493 and 500 to 514; these read AKPKSQKKPA and LRKR…RQRR. The 173-residue stretch at 615–787 folds into the tr-type G domain; sequence RRPPVVTVMG…ILLVTEVEDL (173 aa). The G1 stretch occupies residues 624–631; sequence GHVDHGKT. 624-631 lines the GTP pocket; that stretch reads GHVDHGKT. The tract at residues 649-653 is G2; the sequence is GITQH. The tract at residues 674-677 is G3; the sequence is DTPG. Residues 674-678 and 728-731 contribute to the GTP site; these read DTPGH and NKTD. Positions 728–731 are G4; sequence NKTD. The tract at residues 764 to 766 is G5; the sequence is SAI.

This sequence belongs to the TRAFAC class translation factor GTPase superfamily. Classic translation factor GTPase family. IF-2 subfamily.

It is found in the cytoplasm. Its function is as follows. One of the essential components for the initiation of protein synthesis. Protects formylmethionyl-tRNA from spontaneous hydrolysis and promotes its binding to the 30S ribosomal subunits. Also involved in the hydrolysis of GTP during the formation of the 70S ribosomal complex. This is Translation initiation factor IF-2 from Prochlorococcus marinus (strain MIT 9303).